A 379-amino-acid chain; its full sequence is Carbamoyl phosphate synthase small chain (379 aa).

Residues 1 to 189 are CPSase; the sequence is MSKLALLVLE…GLPEAKDDSE (189 aa). Residues Ser47, Gly241, and Gly243 each coordinate L-glutamine. The Glutamine amidotransferase type-1 domain occupies 193–379; sequence HVVAYDFGAK…FIELIKKHSA (187 aa). Cys269 acts as the Nucleophile in catalysis. Residues Leu270, Gln273, Asn311, Gly313, and Phe314 each contribute to the L-glutamine site. Catalysis depends on residues His353 and Glu355.

It belongs to the CarA family. In terms of assembly, composed of two chains; the small (or glutamine) chain promotes the hydrolysis of glutamine to ammonia, which is used by the large (or ammonia) chain to synthesize carbamoyl phosphate. Tetramer of heterodimers (alpha,beta)4.

The enzyme catalyses hydrogencarbonate + L-glutamine + 2 ATP + H2O = carbamoyl phosphate + L-glutamate + 2 ADP + phosphate + 2 H(+). The catalysed reaction is L-glutamine + H2O = L-glutamate + NH4(+). The protein operates within amino-acid biosynthesis; L-arginine biosynthesis; carbamoyl phosphate from bicarbonate: step 1/1. It participates in pyrimidine metabolism; UMP biosynthesis via de novo pathway; (S)-dihydroorotate from bicarbonate: step 1/3. In terms of biological role, small subunit of the glutamine-dependent carbamoyl phosphate synthetase (CPSase). CPSase catalyzes the formation of carbamoyl phosphate from the ammonia moiety of glutamine, carbonate, and phosphate donated by ATP, constituting the first step of 2 biosynthetic pathways, one leading to arginine and/or urea and the other to pyrimidine nucleotides. The small subunit (glutamine amidotransferase) binds and cleaves glutamine to supply the large subunit with the substrate ammonia. This is Carbamoyl phosphate synthase small chain from Vibrio parahaemolyticus serotype O3:K6 (strain RIMD 2210633).